Here is a 1342-residue protein sequence, read N- to C-terminus: DNA-directed RNA polymerase subunit beta (1342 aa).

This sequence belongs to the RNA polymerase beta chain family. As to quaternary structure, the RNAP catalytic core consists of 2 alpha, 1 beta, 1 beta' and 1 omega subunit. When a sigma factor is associated with the core the holoenzyme is formed, which can initiate transcription.

It carries out the reaction RNA(n) + a ribonucleoside 5'-triphosphate = RNA(n+1) + diphosphate. DNA-dependent RNA polymerase catalyzes the transcription of DNA into RNA using the four ribonucleoside triphosphates as substrates. The polypeptide is DNA-directed RNA polymerase subunit beta (Salmonella typhi).